The sequence spans 199 residues: Recombination protein RecR (199 aa).

Residues 57 to 72 (CSQCHNITDTDPCQIC) form a C4-type zinc finger. Residues 80 to 176 (TTICVVQESR…KVTRLAHGLP (97 aa)) enclose the Toprim domain.

It belongs to the RecR family.

Functionally, may play a role in DNA repair. It seems to be involved in an RecBC-independent recombinational process of DNA repair. It may act with RecF and RecO. In Shouchella clausii (strain KSM-K16) (Alkalihalobacillus clausii), this protein is Recombination protein RecR.